The following is a 297-amino-acid chain: ClpXP adapter protein SpxH (297 aa).

Belongs to the SpxH family. In terms of assembly, interacts with Spx.

The protein localises to the cytoplasm. Its function is as follows. Adapter protein required for efficient degradation of Spx by ClpXP under non-stress conditions. Interaction with Spx stabilizes Spx and exposes the C-terminus of Spx for recognition and proteolysis by ClpXP. The sequence is that of ClpXP adapter protein SpxH from Bacillus cereus (strain ATCC 14579 / DSM 31 / CCUG 7414 / JCM 2152 / NBRC 15305 / NCIMB 9373 / NCTC 2599 / NRRL B-3711).